Consider the following 95-residue polypeptide: DNA-directed RNA polymerase subunit Rpo11 (95 aa).

This sequence belongs to the archaeal Rpo11/eukaryotic RPB11/RPC19 RNA polymerase subunit family. Part of the RNA polymerase complex.

Its subcellular location is the cytoplasm. The catalysed reaction is RNA(n) + a ribonucleoside 5'-triphosphate = RNA(n+1) + diphosphate. DNA-dependent RNA polymerase (RNAP) catalyzes the transcription of DNA into RNA using the four ribonucleoside triphosphates as substrates. This chain is DNA-directed RNA polymerase subunit Rpo11, found in Pyrococcus horikoshii (strain ATCC 700860 / DSM 12428 / JCM 9974 / NBRC 100139 / OT-3).